Consider the following 172-residue polypeptide: AIG2-like protein B (172 aa).

15–20 contacts substrate; it reads YGSFQE. The active-site Proton acceptor is the glutamate 83. Residues 146–165 are compositionally biased toward basic and acidic residues; it reads KRNPQGKGRDDFSNVLKEED. Residues 146-172 are disordered; that stretch reads KRNPQGKGRDDFSNVLKEEDPANAPSS.

Belongs to the gamma-glutamylcyclotransferase family. As to expression, expressed in flowerss, leaves, stems, seeds and roots.

It is found in the cell membrane. In terms of biological role, putative gamma-glutamylcyclotransferase. This is AIG2-like protein B from Arabidopsis thaliana (Mouse-ear cress).